The primary structure comprises 320 residues: Malate dehydrogenase (320 aa).

Residues 10-15 (GSGMIG) and Asp34 each bind NAD(+). Positions 83 and 89 each coordinate substrate. NAD(+)-binding positions include Asn96 and 119 to 121 (ITN). Substrate contacts are provided by Asn121 and Arg152. His176 acts as the Proton acceptor in catalysis.

It belongs to the LDH/MDH superfamily. MDH type 3 family.

It catalyses the reaction (S)-malate + NAD(+) = oxaloacetate + NADH + H(+). In terms of biological role, catalyzes the reversible oxidation of malate to oxaloacetate. The chain is Malate dehydrogenase from Agrobacterium fabrum (strain C58 / ATCC 33970) (Agrobacterium tumefaciens (strain C58)).